The following is a 298-amino-acid chain: N-acetylmuramic acid 6-phosphate etherase (298 aa).

In terms of domain architecture, SIS spans 55 to 218 (IHAQVSGGGR…STGLMIKSGK (164 aa)). Residue glutamate 83 is the Proton donor of the active site. Glutamate 114 is a catalytic residue.

It belongs to the GCKR-like family. MurNAc-6-P etherase subfamily. In terms of assembly, homodimer.

The catalysed reaction is N-acetyl-D-muramate 6-phosphate + H2O = N-acetyl-D-glucosamine 6-phosphate + (R)-lactate. The protein operates within amino-sugar metabolism; 1,6-anhydro-N-acetylmuramate degradation. It participates in amino-sugar metabolism; N-acetylmuramate degradation. Its pathway is cell wall biogenesis; peptidoglycan recycling. Specifically catalyzes the cleavage of the D-lactyl ether substituent of MurNAc 6-phosphate, producing GlcNAc 6-phosphate and D-lactate. Together with AnmK, is also required for the utilization of anhydro-N-acetylmuramic acid (anhMurNAc) either imported from the medium or derived from its own cell wall murein, and thus plays a role in cell wall recycling. This is N-acetylmuramic acid 6-phosphate etherase from Escherichia coli O157:H7 (strain EC4115 / EHEC).